The chain runs to 268 residues: Resolvase (268 aa).

The Tyr recombinase domain occupies 47-250; that stretch reads ELPKYLLAPE…FALDVAARHR (204 aa). Catalysis depends on residues arginine 82, lysine 114, histidine 202, arginine 205, and histidine 228. Tyrosine 237 functions as the O-(3'-phospho-DNA)-tyrosine intermediate in the catalytic mechanism.

This sequence belongs to the 'phage' integrase family.

Functionally, acts as a repressor of transcription and as a site-specific resolvase that cleaves at the RfsF site. The polypeptide is Resolvase (resD) (Escherichia coli (strain K12)).